The primary structure comprises 687 residues: Protein FAR1-RELATED SEQUENCE 1 (687 aa).

Residues E35–T137 enclose the FAR1 domain. In terms of domain architecture, MULE spans K211 to P254. An SWIM-type zinc finger spans residues F440 to G476. The stretch at N540 to S562 forms a coiled coil.

Belongs to the FHY3/FAR1 family. In terms of tissue distribution, expressed in rosette and cauline leaves, inflorescences stems, flowers and siliques.

Its subcellular location is the nucleus. Functionally, putative transcription activator involved in regulating light control of development. This is Protein FAR1-RELATED SEQUENCE 1 (FRS1) from Arabidopsis thaliana (Mouse-ear cress).